Consider the following 281-residue polypeptide: MLEIIFEDDHDAAAFLHLIQHSDDRNNIIVREGIRKIGIEKANPAFPIQRFMEPILVKFFLECKEDEHMLSLIEETYCFTDQDEQQQILQLAHSIIEGEADDLPFEPLKLSRKQSILDELQTICLEEGVFYIRSFQTFRLGSYYKQLRDITEAAIDEYKMEQEYQNFIQTLRDYVDAKQPRIKKVHIVHDGSFTLWELRYVPEREKMKYIDRRFVRDHPMYIDSHLLAPLISIAPDEVVLYTDQPEHMMARTIQNVFQERVEMLPLHAFTDAEIPVKHSEG.

This is an uncharacterized protein from Bacillus subtilis (strain 168).